The following is a 464-amino-acid chain: Protein FAM90A24 (464 aa).

3 disordered regions span residues Met1–Leu42, Val69–Ala389, and His415–Pro437. 2 stretches are compositionally biased toward basic and acidic residues: residues Gly74–Gly89 and Asn97–Arg114. The span at Leu180–Leu197 shows a compositional bias: low complexity.

The protein belongs to the FAM90 family.

This is Protein FAM90A24 from Homo sapiens (Human).